Here is a 160-residue protein sequence, read N- to C-terminus: Putative flagellin YvzB (160 aa).

Belongs to the bacterial flagellin family. Interacts with FliW.

It is found in the bacterial flagellum. The protein is Putative flagellin YvzB (yvzB) of Bacillus subtilis (strain 168).